Consider the following 311-residue polypeptide: Coproporphyrin III ferrochelatase 1 (311 aa).

Residues Y12, R29, R45–Y46, S53, and Y124 contribute to the Fe-coproporphyrin III site. The Fe(2+) site is built by H182 and E263.

It belongs to the ferrochelatase family.

The protein resides in the cytoplasm. The catalysed reaction is Fe-coproporphyrin III + 2 H(+) = coproporphyrin III + Fe(2+). It functions in the pathway porphyrin-containing compound metabolism; protoheme biosynthesis. Involved in coproporphyrin-dependent heme b biosynthesis. Catalyzes the insertion of ferrous iron into coproporphyrin III to form Fe-coproporphyrin III. The sequence is that of Coproporphyrin III ferrochelatase 1 from Bacillus cereus (strain ZK / E33L).